A 302-amino-acid polypeptide reads, in one-letter code: Nucleotide-binding protein SE_0548 (302 aa).

Position 18-25 (18-25) interacts with ATP; sequence GMSGAGKS. GTP is bound at residue 69–72; it reads DLRG.

Belongs to the RapZ-like family.

Functionally, displays ATPase and GTPase activities. The sequence is that of Nucleotide-binding protein SE_0548 from Staphylococcus epidermidis (strain ATCC 12228 / FDA PCI 1200).